An 861-amino-acid polypeptide reads, in one-letter code: DNA mismatch repair protein MutS (861 aa).

Gly609 to Ser616 is an ATP binding site.

It belongs to the DNA mismatch repair MutS family.

In terms of biological role, this protein is involved in the repair of mismatches in DNA. It is possible that it carries out the mismatch recognition step. This protein has a weak ATPase activity. This is DNA mismatch repair protein MutS from Borrelia hermsii (strain HS1 / DAH).